A 191-amino-acid polypeptide reads, in one-letter code: Glycerol-3-phosphate acyltransferase (191 aa).

A run of 5 helical transmembrane segments spans residues 10–30, 57–77, 84–104, 118–138, and 158–178; these read LAFI…CISA, FGSV…FLAV, FAST…YMAF, FVLV…FFVL, and YALL…LIFI.

The protein belongs to the PlsY family. As to quaternary structure, probably interacts with PlsX.

The protein resides in the cell inner membrane. The catalysed reaction is an acyl phosphate + sn-glycerol 3-phosphate = a 1-acyl-sn-glycero-3-phosphate + phosphate. It functions in the pathway lipid metabolism; phospholipid metabolism. In terms of biological role, catalyzes the transfer of an acyl group from acyl-phosphate (acyl-PO(4)) to glycerol-3-phosphate (G3P) to form lysophosphatidic acid (LPA). This enzyme utilizes acyl-phosphate as fatty acyl donor, but not acyl-CoA or acyl-ACP. The chain is Glycerol-3-phosphate acyltransferase from Neorickettsia sennetsu (strain ATCC VR-367 / Miyayama) (Ehrlichia sennetsu).